Consider the following 64-residue polypeptide: Large ribosomal subunit protein bL28 (64 aa).

It belongs to the bacterial ribosomal protein bL28 family.

The chain is Large ribosomal subunit protein bL28 from Bifidobacterium longum (strain NCC 2705).